Consider the following 81-residue polypeptide: Large ribosomal subunit protein bL31B (81 aa).

This sequence belongs to the bacterial ribosomal protein bL31 family. Type B subfamily. As to quaternary structure, part of the 50S ribosomal subunit.

This chain is Large ribosomal subunit protein bL31B, found in Lactococcus lactis subsp. cremoris (strain MG1363).